A 508-amino-acid polypeptide reads, in one-letter code: Maturase K (508 aa).

The protein belongs to the intron maturase 2 family. MatK subfamily.

The protein localises to the plastid. The protein resides in the chloroplast. Usually encoded in the trnK tRNA gene intron. Probably assists in splicing its own and other chloroplast group II introns. This Ranunculus lingua (Greater spearwort) protein is Maturase K.